The sequence spans 368 residues: Methionine import ATP-binding protein MetN (368 aa).

The segment covering 1-14 (MASDAQPSVDQPSA) has biased composition (polar residues). Residues 1–27 (MASDAQPSVDQPSAGTPGATGNSTGTT) are disordered. Residues 15 to 27 (GTPGATGNSTGTT) are compositionally biased toward low complexity. Residues 31–270 (IVFRDVTKIF…PQTKTAANFV (240 aa)) form the ABC transporter domain. 67–74 (GYSGAGKS) is an ATP binding site.

Belongs to the ABC transporter superfamily. Methionine importer (TC 3.A.1.24) family. As to quaternary structure, the complex is composed of two ATP-binding proteins (MetN), two transmembrane proteins (MetI) and a solute-binding protein (MetQ).

The protein localises to the cell membrane. The enzyme catalyses L-methionine(out) + ATP + H2O = L-methionine(in) + ADP + phosphate + H(+). It carries out the reaction D-methionine(out) + ATP + H2O = D-methionine(in) + ADP + phosphate + H(+). In terms of biological role, part of the ABC transporter complex MetNIQ involved in methionine import. Responsible for energy coupling to the transport system. The sequence is that of Methionine import ATP-binding protein MetN from Corynebacterium jeikeium (strain K411).